The following is a 440-amino-acid chain: tRNA(Ile)-lysidine synthase (440 aa).

ATP is bound at residue 29–34 (SGGLDS).

Belongs to the tRNA(Ile)-lysidine synthase family.

The protein resides in the cytoplasm. The enzyme catalyses cytidine(34) in tRNA(Ile2) + L-lysine + ATP = lysidine(34) in tRNA(Ile2) + AMP + diphosphate + H(+). Ligates lysine onto the cytidine present at position 34 of the AUA codon-specific tRNA(Ile) that contains the anticodon CAU, in an ATP-dependent manner. Cytidine is converted to lysidine, thus changing the amino acid specificity of the tRNA from methionine to isoleucine. This chain is tRNA(Ile)-lysidine synthase, found in Pectobacterium atrosepticum (strain SCRI 1043 / ATCC BAA-672) (Erwinia carotovora subsp. atroseptica).